Consider the following 590-residue polypeptide: Ankyrin repeat domain-containing protein 13A (590 aa).

ANK repeat units follow at residues 40–69 (RGRT…DVTK) and 73–102 (QGWT…YHNT). Phosphoserine is present on Ser-205. UIM domains are found at residues 483-502 (EDYE…SSRS), 519-538 (TYDA…STEG), 549-568 (RFDN…LEEW), and 574-590 (EEEA…LTDK). The residue at position 586 (Ser-586) is a Phosphoserine.

In terms of assembly, interacts (via the UIM 3 and 4 repeats) with EGFR (ubiquitinated); the interaction is direct, inhibited by ANKRD13A monoubiquitination and may regulate EGFR internalization. Post-translationally, monoubiquitinated, inhibits interaction with ubiquitinated EGFR.

The protein localises to the cell membrane. The protein resides in the late endosome. In terms of biological role, ubiquitin-binding protein that specifically recognizes and binds 'Lys-63'-linked ubiquitin. Does not bind 'Lys-48'-linked ubiquitin. Positively regulates the internalization of ligand-activated EGFR by binding to the Ub moiety of ubiquitinated EGFR at the cell membrane. The protein is Ankyrin repeat domain-containing protein 13A (ANKRD13A) of Homo sapiens (Human).